A 459-amino-acid chain; its full sequence is Friend virus susceptibility protein 1 (459 aa).

Residues 192-269 (EAELPTVLAS…LNSLAHSNRQ (78 aa)) form a disordered region. The segment covering 213-223 (SKERTQQDKAD) has biased composition (basic and acidic residues). The segment covering 226-238 (QIQSSTSLVTSEP) has biased composition (polar residues).

Retroviral restriction factor that prevents infection by gammaretroviruses. Acts by interacting with the capsid protein ca after entry of the virus into the cell. This interaction presumably disrupt the capsid thereby inactivating the viral genome, making it unable to enter host nucleus and integrate into host genome. The protein is Friend virus susceptibility protein 1 (Fv1) of Mus musculus (Mouse).